The following is a 296-amino-acid chain: CDP-diacylglycerol--glycerol-3-phosphate 3-phosphatidyltransferase 1, chloroplastic/mitochondrial (296 aa).

Residues 1–39 (MLRSGLASLIVDVNLRRTLRPSPTFSFPAHLSRCIITSR) constitute a chloroplast and mitochondrion transit peptide. The span at 62-82 (FSSSSSSEQSRPTSSSRNSFS) shows a compositional bias: low complexity. The disordered stretch occupies residues 62-103 (FSSSSSSEQSRPTSSSRNSFSGHGQLDSDDNSSPPPSQSSSK). The next 5 membrane-spanning stretches (helical) occupy residues 104–124 (VLTL…LLVA), 126–146 (FYVD…AAAI), 164–184 (FGAF…LILL), 189–209 (IQVA…IAII), and 261–281 (VGWL…LSVW).

Belongs to the CDP-alcohol phosphatidyltransferase class-I family. Requires Mn(2+) as cofactor.

The protein resides in the plastid. It is found in the chloroplast membrane. The protein localises to the mitochondrion membrane. It catalyses the reaction a CDP-1,2-diacyl-sn-glycerol + sn-glycerol 3-phosphate = a 1,2-diacyl-sn-glycero-3-phospho-(1'-sn-glycero-3'-phosphate) + CMP + H(+). The protein operates within phospholipid metabolism; phosphatidylglycerol biosynthesis; phosphatidylglycerol from CDP-diacylglycerol: step 1/2. Catalyzes the committed step to the synthesis of the acidic phospholipids, including phosphatidylglycerol (PG). Transfers specifically a phosphatidyl group from CDP-diacylglycerol to glycerol-3-phosphate to form phosphatidylglycerophosphate. Cannot catalyze the phosphatidyl group transfer to inositol, serine, choline or phosphatidylglycerol. Possesses high activity with CDP-dipalmitoylglycerol and low activity with CDP-dioleoylglycerol. Essential for chloroplast differentiation and PG accumulation in thylakoids, an essential process for the assembly of antenna-reaction center complexes to optimize energy transfer from antenna pigments, and for subsequent photochemical efficiency of photosystem II (PSII). During cold acclimation (at 5 degrees Celsius), necessary for the photosystem I (PSI) photochemistry, including both reaction center and light-harvesting integrity. But dispensable in mitochondrion, being redundant with PGPS2 for the production of PG and its derivative cardiolipin (CL) in mitochondrial membranes. Together with PGPS2, required for the proper embryo development by providing PG accurate levels. The sequence is that of CDP-diacylglycerol--glycerol-3-phosphate 3-phosphatidyltransferase 1, chloroplastic/mitochondrial from Arabidopsis thaliana (Mouse-ear cress).